The sequence spans 585 residues: Arginine--tRNA ligase (585 aa).

A 'HIGH' region motif is present at residues 131-141 (ANPTGPMHVGH).

It belongs to the class-I aminoacyl-tRNA synthetase family. In terms of assembly, monomer.

The protein resides in the cytoplasm. The enzyme catalyses tRNA(Arg) + L-arginine + ATP = L-arginyl-tRNA(Arg) + AMP + diphosphate. This is Arginine--tRNA ligase from Agrobacterium fabrum (strain C58 / ATCC 33970) (Agrobacterium tumefaciens (strain C58)).